A 98-amino-acid polypeptide reads, in one-letter code: NADH-ubiquinone oxidoreductase chain 4L (98 aa).

3 helical membrane-spanning segments follow: residues 1-21, 29-49, and 61-81; these read MPVV…GLLV, SLLC…VTVL, and IILL…LVMV.

The protein belongs to the complex I subunit 4L family. As to quaternary structure, core subunit of respiratory chain NADH dehydrogenase (Complex I) which is composed of 45 different subunits.

It localises to the mitochondrion inner membrane. The enzyme catalyses a ubiquinone + NADH + 5 H(+)(in) = a ubiquinol + NAD(+) + 4 H(+)(out). Functionally, core subunit of the mitochondrial membrane respiratory chain NADH dehydrogenase (Complex I) which catalyzes electron transfer from NADH through the respiratory chain, using ubiquinone as an electron acceptor. Part of the enzyme membrane arm which is embedded in the lipid bilayer and involved in proton translocation. The sequence is that of NADH-ubiquinone oxidoreductase chain 4L (MT-ND4L) from Ursus arctos (Brown bear).